The chain runs to 439 residues: ATP-dependent protease ATPase subunit HslU (439 aa).

ATP-binding positions include I17, 59–64 (GVGKTE), D251, E317, and R389.

It belongs to the ClpX chaperone family. HslU subfamily. A double ring-shaped homohexamer of HslV is capped on each side by a ring-shaped HslU homohexamer. The assembly of the HslU/HslV complex is dependent on binding of ATP.

The protein localises to the cytoplasm. Functionally, ATPase subunit of a proteasome-like degradation complex; this subunit has chaperone activity. The binding of ATP and its subsequent hydrolysis by HslU are essential for unfolding of protein substrates subsequently hydrolyzed by HslV. HslU recognizes the N-terminal part of its protein substrates and unfolds these before they are guided to HslV for hydrolysis. The protein is ATP-dependent protease ATPase subunit HslU of Campylobacter jejuni subsp. jejuni serotype O:6 (strain 81116 / NCTC 11828).